The chain runs to 1152 residues: Receptor-type guanylate cyclase gcy-8 (1152 aa).

The N-terminal stretch at 1–21 (MRTKKAFLLLTFNVLIYLAAC) is a signal peptide. Topologically, residues 22 to 506 (QETERILANN…GYRNERCDYT (485 aa)) are extracellular. Asn31, Asn55, Asn385, and Asn465 each carry an N-linked (GlcNAc...) asparagine glycan. The helical transmembrane segment at 507-527 (LIIIGAALILLFIVAAVSAFF) threads the bilayer. Over 528–1152 (AQKILEKRAL…NLKNPTGLQR (625 aa)) the chain is Cytoplasmic. One can recognise a Protein kinase domain in the interval 567–857 (RTKMSNMNYG…RIKLNVETYL (291 aa)). ATP is bound by residues 573-581 (MNYGSRNHA) and Lys593. The stretch at 861-899 (GSLVDQMTRMMEQYANNLEKLVAERTGMLEEANQRADRL) forms a coiled coil. The Guanylate cyclase domain maps to 927–1057 (TVLFSDIVGF…DTVNMASRME (131 aa)). Residues Asp932, Ile933, and Asp976 each contribute to the Mg(2+) site.

This sequence belongs to the adenylyl cyclase class-4/guanylyl cyclase family. Expressed bilaterally in AFD sensory neurons.

It localises to the cell membrane. It is found in the cell projection. The protein resides in the cilium. The enzyme catalyses GTP = 3',5'-cyclic GMP + diphosphate. Its activity is regulated as follows. Inhibited by chloride with an IC(50) of 60 mM. In terms of biological role, guanylate cyclase involved in the production of the second messenger cGMP. Regulates thermotaxis responses in AFD sensory neurons. May regulate AFD neuronal activity such as calcium responses to temperature gradients. Maintains the microvilli receptive ending morphology of the AFD thermosensory neurons by regulating cGMP levels downstream of kcc-3. cGMP levels antagonize the actin cytoskeleton regulator wsp-1. This Caenorhabditis elegans protein is Receptor-type guanylate cyclase gcy-8.